The primary structure comprises 86 residues: Exodeoxyribonuclease 7 small subunit (86 aa).

A disordered region spans residues 1 to 26 (MQDELFETEKAPQKNAKNAKNAPKKS).

The protein belongs to the XseB family. As to quaternary structure, heterooligomer composed of large and small subunits.

The protein localises to the cytoplasm. It carries out the reaction Exonucleolytic cleavage in either 5'- to 3'- or 3'- to 5'-direction to yield nucleoside 5'-phosphates.. In terms of biological role, bidirectionally degrades single-stranded DNA into large acid-insoluble oligonucleotides, which are then degraded further into small acid-soluble oligonucleotides. The sequence is that of Exodeoxyribonuclease 7 small subunit from Helicobacter pylori (strain J99 / ATCC 700824) (Campylobacter pylori J99).